Consider the following 301-residue polypeptide: Glycine cleavage system transcriptional activator homolog (301 aa).

Residues 10 to 67 (PPLNSLKSFESAARYLSFTKAADELCVTQAAVSHQIKLLEXFLGIDLFKRKNRSLELT) enclose the HTH lysR-type domain. Residues 27–46 (FTKAADELCVTQAAVSHQIK) constitute a DNA-binding region (H-T-H motif).

The protein belongs to the LysR transcriptional regulatory family.

Its subcellular location is the cytoplasm. In terms of biological role, not known, the gcv operon regulated by the E.coli homolog does not exist in H.influenzae, so it probably acts as a transcriptional regulator on some other operon. The protein is Glycine cleavage system transcriptional activator homolog (gcvA) of Haemophilus influenzae (strain ATCC 51907 / DSM 11121 / KW20 / Rd).